The sequence spans 358 residues: Peptide chain release factor 1 (358 aa).

At Gln233 the chain carries N5-methylglutamine.

This sequence belongs to the prokaryotic/mitochondrial release factor family. Methylated by PrmC. Methylation increases the termination efficiency of RF1.

Its subcellular location is the cytoplasm. Functionally, peptide chain release factor 1 directs the termination of translation in response to the peptide chain termination codons UAG and UAA. This Listeria innocua serovar 6a (strain ATCC BAA-680 / CLIP 11262) protein is Peptide chain release factor 1.